The chain runs to 287 residues: ATP phosphoribosyltransferase (287 aa).

The protein belongs to the ATP phosphoribosyltransferase family. Long subfamily. As to quaternary structure, equilibrium between an active dimeric form, an inactive hexameric form and higher aggregates. Interconversion between the various forms is largely reversible and is influenced by the natural substrates and inhibitors of the enzyme. Mg(2+) serves as cofactor.

It localises to the cytoplasm. The catalysed reaction is 1-(5-phospho-beta-D-ribosyl)-ATP + diphosphate = 5-phospho-alpha-D-ribose 1-diphosphate + ATP. Its pathway is amino-acid biosynthesis; L-histidine biosynthesis; L-histidine from 5-phospho-alpha-D-ribose 1-diphosphate: step 1/9. With respect to regulation, feedback inhibited by histidine. Its function is as follows. Catalyzes the condensation of ATP and 5-phosphoribose 1-diphosphate to form N'-(5'-phosphoribosyl)-ATP (PR-ATP). Has a crucial role in the pathway because the rate of histidine biosynthesis seems to be controlled primarily by regulation of HisG enzymatic activity. The protein is ATP phosphoribosyltransferase (hisG) of Mycobacterium leprae (strain TN).